We begin with the raw amino-acid sequence, 50 residues long: Cytochrome c oxidase subunit 4 (50 aa).

Residues 2-17 lie on the Cytoplasmic side of the membrane; sequence ASHHEITDHKHGEMDI. The helical transmembrane segment at 18–49 threads the bilayer; the sequence is RHQQATFAGFIKGATWVSILSIAVLVFLALAN. Position 50 (S50) is a topological domain, periplasmic.

Its subcellular location is the cell inner membrane. It carries out the reaction 4 Fe(II)-[cytochrome c] + O2 + 8 H(+)(in) = 4 Fe(III)-[cytochrome c] + 2 H2O + 4 H(+)(out). Not required for enzymatic activity or proton pumping of the cytochrome c oxidase complex. This Paracoccus denitrificans protein is Cytochrome c oxidase subunit 4 (ctaH).